A 146-amino-acid chain; its full sequence is Hemoglobin subunit beta-1/2 (146 aa).

A Globin domain is found at 2–146 (EWTDKERSII…VVSALGKQYH (145 aa)). 2 residues coordinate heme b: His-63 and His-92.

The protein belongs to the globin family. Hb1 is a heterotetramer of two alpha-1 chains and two beta chains. Hb2 is a heterotetramer of two alpha-2 chains and two beta chains. Red blood cells.

Its function is as follows. Involved in oxygen transport from gills to the various peripheral tissues. This is Hemoglobin subunit beta-1/2 from Trematomus newnesi (Dusky notothen).